Consider the following 230-residue polypeptide: TorCAD operon transcriptional regulatory protein TorR (230 aa).

Residues 4–117 (HIVIVEDEPV…ELVVRVKNLL (114 aa)) form the Response regulatory domain. The residue at position 53 (Asp-53) is a 4-aspartylphosphate. The segment at residues 132–227 (DNCYRFAGYC…QHGEGYFLAA (96 aa)) is a DNA-binding region (ompR/PhoB-type).

Interacts with TorI. TorI binds to the effector domain of TorR. This interaction, which does not interfere with TorR DNA binding activity, probably prevents the recruitment of RNA polymerase to the torCAD promoter. Post-translationally, phosphorylated and dephosphorylated by TorS.

It is found in the cytoplasm. Member of the two-component regulatory system TorS/TorR involved in the anaerobic utilization of trimethylamine-N-oxide (TMAO). Phosphorylated TorR activates the transcription of the torCAD operon by binding to four decameric boxes located in the torCAD promoter. Box1, 2 and 4 contain the DNA sequence 5'-CTGTTCATAT-3' and box3 contains the DNA sequence 5'-CCGTTCATCC-3'. Phosphorylated as well as unphosphorylated TorR negatively regulates its own expression by binding to box1 and 2. This is TorCAD operon transcriptional regulatory protein TorR (torR) from Escherichia coli (strain K12).